The sequence spans 206 residues: Dephospho-CoA kinase (206 aa).

The 201-residue stretch at 4–204 (IVGLTGGIGS…HQYLQLANAQ (201 aa)) folds into the DPCK domain. 12-17 (GSGKST) lines the ATP pocket.

This sequence belongs to the CoaE family.

It is found in the cytoplasm. The enzyme catalyses 3'-dephospho-CoA + ATP = ADP + CoA + H(+). Its pathway is cofactor biosynthesis; coenzyme A biosynthesis; CoA from (R)-pantothenate: step 5/5. Its function is as follows. Catalyzes the phosphorylation of the 3'-hydroxyl group of dephosphocoenzyme A to form coenzyme A. The protein is Dephospho-CoA kinase of Pasteurella multocida (strain Pm70).